A 335-amino-acid chain; its full sequence is Holliday junction branch migration complex subunit RuvB (335 aa).

A large ATPase domain (RuvB-L) region spans residues 4–184; the sequence is ADRLIDATEK…FGIVQRLEFY (181 aa). Residues Ile-23, Arg-24, Gly-65, Lys-68, Thr-69, Thr-70, 131-133, Arg-174, Tyr-184, and Arg-221 each bind ATP; that span reads EDY. A Mg(2+)-binding site is contributed by Thr-69. The interval 185–255 is small ATPAse domain (RuvB-S); the sequence is SVEDLSYIVG…VAELALNMID (71 aa). Residues 258–335 form a head domain (RuvB-H) region; sequence KSGFDYMDRK…HHFGLLPKQD (78 aa). DNA is bound by residues Arg-313 and Arg-318.

The protein belongs to the RuvB family. As to quaternary structure, homohexamer. Forms an RuvA(8)-RuvB(12)-Holliday junction (HJ) complex. HJ DNA is sandwiched between 2 RuvA tetramers; dsDNA enters through RuvA and exits via RuvB. An RuvB hexamer assembles on each DNA strand where it exits the tetramer. Each RuvB hexamer is contacted by two RuvA subunits (via domain III) on 2 adjacent RuvB subunits; this complex drives branch migration. In the full resolvosome a probable DNA-RuvA(4)-RuvB(12)-RuvC(2) complex forms which resolves the HJ.

It localises to the cytoplasm. The catalysed reaction is ATP + H2O = ADP + phosphate + H(+). Its function is as follows. The RuvA-RuvB-RuvC complex processes Holliday junction (HJ) DNA during genetic recombination and DNA repair, while the RuvA-RuvB complex plays an important role in the rescue of blocked DNA replication forks via replication fork reversal (RFR). RuvA specifically binds to HJ cruciform DNA, conferring on it an open structure. The RuvB hexamer acts as an ATP-dependent pump, pulling dsDNA into and through the RuvAB complex. RuvB forms 2 homohexamers on either side of HJ DNA bound by 1 or 2 RuvA tetramers; 4 subunits per hexamer contact DNA at a time. Coordinated motions by a converter formed by DNA-disengaged RuvB subunits stimulates ATP hydrolysis and nucleotide exchange. Immobilization of the converter enables RuvB to convert the ATP-contained energy into a lever motion, pulling 2 nucleotides of DNA out of the RuvA tetramer per ATP hydrolyzed, thus driving DNA branch migration. The RuvB motors rotate together with the DNA substrate, which together with the progressing nucleotide cycle form the mechanistic basis for DNA recombination by continuous HJ branch migration. Branch migration allows RuvC to scan DNA until it finds its consensus sequence, where it cleaves and resolves cruciform DNA. The chain is Holliday junction branch migration complex subunit RuvB from Pseudoalteromonas translucida (strain TAC 125).